The chain runs to 304 residues: MIRQRTLKNMIWGTGIGLHSGKKVYIGLRPAPVNTGIVFHRSDIEGGAWIKADPLHVVDTRLSTNIGDGHIRVGTVEHLMSALAGLGIDNAYVDLDGPEVPIMDGSAAPFVFLIQCAGIEEQNAPKRFIRITKPLKAEDGDRWVQLEPFEGFKVSFAIDFDHPVMKNGGQEVTVDFARTSYLKEVARARTFGFMREVEALRRMGLALGGNLDNAIVVDDYRVLNEEGLRYTNEFVRHKVLDSIGDLYLLGHPLVGHFSGHKAGHALNNSLLRALLLRQDAWEFVDYAERRAPFSFADTLVTASA.

Histidine 78, histidine 237, and aspartate 241 together coordinate Zn(2+). Histidine 264 serves as the catalytic Proton donor.

This sequence belongs to the LpxC family. It depends on Zn(2+) as a cofactor.

It catalyses the reaction a UDP-3-O-[(3R)-3-hydroxyacyl]-N-acetyl-alpha-D-glucosamine + H2O = a UDP-3-O-[(3R)-3-hydroxyacyl]-alpha-D-glucosamine + acetate. Its pathway is glycolipid biosynthesis; lipid IV(A) biosynthesis; lipid IV(A) from (3R)-3-hydroxytetradecanoyl-[acyl-carrier-protein] and UDP-N-acetyl-alpha-D-glucosamine: step 2/6. In terms of biological role, catalyzes the hydrolysis of UDP-3-O-myristoyl-N-acetylglucosamine to form UDP-3-O-myristoylglucosamine and acetate, the committed step in lipid A biosynthesis. The chain is UDP-3-O-acyl-N-acetylglucosamine deacetylase from Acidithiobacillus ferrooxidans (strain ATCC 53993 / BNL-5-31) (Leptospirillum ferrooxidans (ATCC 53993)).